A 340-amino-acid chain; its full sequence is Sodium/bile acid cotransporter 7 (340 aa).

At 1-10 (MRLLERVRKE) the chain is on the cytoplasmic side. Residues 11-31 (WFMVGIVVAIGAAKLEPSVGV) traverse the membrane as a helical segment. Over 32-37 (NGGPLK) the chain is Extracellular. A helical transmembrane segment spans residues 38-58 (PEITVSYIAVATIFFNSGLSL). The Cytoplasmic portion of the chain corresponds to 59–71 (KTEELTSALVHLK). The chain crosses the membrane as a helical span at residues 72-92 (LHLFIQVFTLAFFPTTIWLFL). At 93 to 116 (QLLSVTSINEWLLKGLQTVGCMPP) the chain is on the extracellular side. The helical transmembrane segment at 117–137 (PVSSAVILTKAVGGNEAAAIF) threads the bilayer. Residue Asn-138 is a topological domain, cytoplasmic. A helical transmembrane segment spans residues 139-159 (SAFGSFLGIVVTPVLLLLFLG). Residues 160-163 (SSSS) are Extracellular-facing. A helical membrane pass occupies residues 164–184 (VPFTSIFSQLFMTVVVPLVIG). Residues 185–201 (QIVRRYIKDWLERKKPP) lie on the Cytoplasmic side of the membrane. Residues 202-222 (FGVVSSSVLLMIIYTTFCDTF) form a helical membrane-spanning segment. At 223–234 (SNPNIDLDKFSL) the chain is on the extracellular side. A helical membrane pass occupies residues 235-255 (ILILFIIVSIQLSFMLLTFVF). Over 256–270 (STRNNSGFTPADTVA) the chain is Cytoplasmic. Residues 271–291 (IIFCSTHKSLTLGIPMLKIVF) traverse the membrane as a helical segment. Topologically, residues 292 to 298 (AGHEHLS) are extracellular. A helical membrane pass occupies residues 299 to 319 (LISLPLLIYHPAQILLGSVLV). Residues 320-340 (PTIKSWMVSRQKGVKLTRPTV) lie on the Cytoplasmic side of the membrane.

Belongs to the bile acid:sodium symporter (BASS) (TC 2.A.28) family. As to expression, strongly expressed in liver, adrenal gland, small intestine and colon. Moderately expressed in heart, lung, kidney and spleen. Weakly expressed in brain.

It localises to the cell membrane. The protein resides in the endoplasmic reticulum membrane. Its subcellular location is the golgi apparatus membrane. Its function is as follows. Involved in teeth and skeletal development. Has an essential role in the biosynthesis and trafficking of glycosaminoglycans and glycoproteins to produce a proper functioning extracellular matrix. Required for extracellular matrix mineralization. Also involved in the regulation of cellular calcium homeostasis. Does not show transport activity towards bile acids or steroid sulfates (including taurocholate, cholate, chenodeoxycholate, estrone-3-sulfate, dehydroepiandrosterone sulfate (DHEAS) and pregnenolone sulfate). This is Sodium/bile acid cotransporter 7 (Slc10a7) from Rattus norvegicus (Rat).